The following is a 192-amino-acid chain: MILASNSQRRQEILKDAGFNFKVITSNIEEISDKKNITERILDIAEKKLEQIAKNNINEFVLAADTVVELDGKILGKPKNREEAFRFLKSLSGKVHRVITAYVFKNISKNILIREVVVSEVKFFDLDDDTINWYLDTDEPFDKAGAYGIQGYGRILVEKINGDYYSIMGFPISNFLENLRKIGYKISLIDKI.

Aspartate 65 functions as the Proton acceptor in the catalytic mechanism.

It belongs to the Maf family. YhdE subfamily. A divalent metal cation serves as cofactor.

It localises to the cytoplasm. The enzyme catalyses dTTP + H2O = dTMP + diphosphate + H(+). It catalyses the reaction UTP + H2O = UMP + diphosphate + H(+). Functionally, nucleoside triphosphate pyrophosphatase that hydrolyzes dTTP and UTP. May have a dual role in cell division arrest and in preventing the incorporation of modified nucleotides into cellular nucleic acids. In Fusobacterium nucleatum subsp. nucleatum (strain ATCC 25586 / DSM 15643 / BCRC 10681 / CIP 101130 / JCM 8532 / KCTC 2640 / LMG 13131 / VPI 4355), this protein is dTTP/UTP pyrophosphatase.